The primary structure comprises 392 residues: Tryptophan synthase beta chain (392 aa).

At Lys84 the chain carries N6-(pyridoxal phosphate)lysine.

Belongs to the TrpB family. In terms of assembly, tetramer of two alpha and two beta chains. Pyridoxal 5'-phosphate is required as a cofactor.

The enzyme catalyses (1S,2R)-1-C-(indol-3-yl)glycerol 3-phosphate + L-serine = D-glyceraldehyde 3-phosphate + L-tryptophan + H2O. It participates in amino-acid biosynthesis; L-tryptophan biosynthesis; L-tryptophan from chorismate: step 5/5. Its function is as follows. The beta subunit is responsible for the synthesis of L-tryptophan from indole and L-serine. This chain is Tryptophan synthase beta chain, found in Campylobacter jejuni subsp. doylei (strain ATCC BAA-1458 / RM4099 / 269.97).